Reading from the N-terminus, the 322-residue chain is Quinolinate synthase (322 aa).

Residues His-37 and Ser-54 each contribute to the iminosuccinate site. Cys-99 is a [4Fe-4S] cluster binding site. Residues 125–127 and Ser-142 each bind iminosuccinate; that span reads YVN. Residue Cys-185 participates in [4Fe-4S] cluster binding. Residues 211 to 213 and Thr-228 contribute to the iminosuccinate site; that span reads HPE. Residue Cys-278 participates in [4Fe-4S] cluster binding.

It belongs to the quinolinate synthase family. Type 2 subfamily. [4Fe-4S] cluster serves as cofactor.

It localises to the cytoplasm. The enzyme catalyses iminosuccinate + dihydroxyacetone phosphate = quinolinate + phosphate + 2 H2O + H(+). It functions in the pathway cofactor biosynthesis; NAD(+) biosynthesis; quinolinate from iminoaspartate: step 1/1. In terms of biological role, catalyzes the condensation of iminoaspartate with dihydroxyacetone phosphate to form quinolinate. This Chlorobaculum tepidum (strain ATCC 49652 / DSM 12025 / NBRC 103806 / TLS) (Chlorobium tepidum) protein is Quinolinate synthase.